The chain runs to 316 residues: HPr kinase/phosphorylase (316 aa).

Residues histidine 146 and lysine 167 contribute to the active site. 161–168 (GESGLGKS) contributes to the ATP binding site. Serine 168 lines the Mg(2+) pocket. Aspartate 185 functions as the Proton acceptor; for phosphorylation activity. Proton donor; for dephosphorylation activity in the catalytic mechanism. Residues 209-218 (LEVRGIGLLD) form an important for the catalytic mechanism of both phosphorylation and dephosphorylation region. Glutamate 210 contributes to the Mg(2+) binding site. Residue arginine 252 is part of the active site. An important for the catalytic mechanism of dephosphorylation region spans residues 273 to 278 (QVEAGR).

Belongs to the HPrK/P family. Homohexamer. Requires Mg(2+) as cofactor.

The catalysed reaction is [HPr protein]-L-serine + ATP = [HPr protein]-O-phospho-L-serine + ADP + H(+). It catalyses the reaction [HPr protein]-O-phospho-L-serine + phosphate + H(+) = [HPr protein]-L-serine + diphosphate. Functionally, catalyzes the ATP- as well as the pyrophosphate-dependent phosphorylation of a specific serine residue in HPr, a phosphocarrier protein of the phosphoenolpyruvate-dependent sugar phosphotransferase system (PTS). HprK/P also catalyzes the pyrophosphate-producing, inorganic phosphate-dependent dephosphorylation (phosphorolysis) of seryl-phosphorylated HPr (P-Ser-HPr). The polypeptide is HPr kinase/phosphorylase (Polaromonas sp. (strain JS666 / ATCC BAA-500)).